The primary structure comprises 366 residues: MIRTEEMLLNVGPQHPSTHGVFRLVIKIDGEIIKEATPVIGYLHRGTEKIAESLQYTQIIPYTDRMDYLSAMTNNYVICHAVETMMGLEIPERAEYLRVLAMELGRIASHLVWWGTNLLDIGAVSPFLYAFREREMIINLLNELCGARLTFNYMRVGGVKWDAPDGWIEKVEEFVPYMREQLAGYHDLVSGNEIFLNRVKGVGIYSEEDAISYSLSGANLRCTGVNWDLRKDEPYSIYDRFDFDIPVGSVGDAWDRYVCRMKEIEESLKIVEQAVQQFPKEGAVLAKVPKIIKAPKGEAFVRIESPRGEIGCYIASDGKKEPYRLKFRRPSFYNLQILPKLLKGENIANLITILGGVDIVLGEVDG.

Belongs to the complex I 49 kDa subunit family. As to quaternary structure, NDH-1 is composed of 14 different subunits. Subunits NuoB, C, D, E, F, and G constitute the peripheral sector of the complex.

The protein localises to the cell membrane. It catalyses the reaction a quinone + NADH + 5 H(+)(in) = a quinol + NAD(+) + 4 H(+)(out). NDH-1 shuttles electrons from NADH, via FMN and iron-sulfur (Fe-S) centers, to quinones in the respiratory chain. The immediate electron acceptor for the enzyme in this species is believed to be a menaquinone. Couples the redox reaction to proton translocation (for every two electrons transferred, four hydrogen ions are translocated across the cytoplasmic membrane), and thus conserves the redox energy in a proton gradient. The polypeptide is NADH-quinone oxidoreductase subunit D (Bacillus cereus (strain ATCC 10987 / NRS 248)).